A 559-amino-acid chain; its full sequence is Glypican-1 (559 aa).

Residues 1 to 23 (MELRARGWWLLYAAAVLVACARG) form the signal peptide. 7 cysteine pairs are disulfide-bonded: Cys32–Cys68, Cys62–Cys256, Cys69–Cys259, Cys191–Cys343, Cys246–Cys279, Cys268–Cys415, and Cys272–Cys401. Residues Asn79 and Asn116 are each glycosylated (N-linked (GlcNAc...) asparagine). Residues 478-539 (FQDASDDGSG…SAAAPTPPQA (62 aa)) are disordered. O-linked (Xyl...) (heparan sulfate) serine glycans are attached at residues Ser486, Ser488, and Ser490. The GPI-anchor amidated serine moiety is linked to residue Ser530. Positions 531–559 (AAAPTPPQASPLLLLGLALALPAVAPRGR) are cleaved as a propeptide — removed in mature form.

The protein belongs to the glypican family. S-nitrosylated in a Cu(2+)-dependent manner. Nitric acid (NO) is released from the nitrosylated cysteines by ascorbate or by some other reducing agent, in a Cu(2+) or Zn(2+) dependent manner. This free nitric oxide is then capable of cleaving the heparan sulfate side chains. Post-translationally, N- and O-glycosylated. N-glycosylation is mainly of the complex type containing sialic acid. O-glycosylated with heparan sulfate. The heparan sulfate chains can be cleaved either by the action of heparanase or, degraded by a deaminative process that uses nitric oxide (NO) released from the S-nitrosylated cysteines. This process is triggered by ascorbate, or by some other reducing agent, in a Cu(2+)- or Zn(2+) dependent manner. Cu(2+) ions are provided by ceruloproteins such as APP, PRNP or CP which associate with GCP1 in intracellular compartments or lipid rafts. In terms of processing, shed from the cell surface probably by further cleavage.

It localises to the cell membrane. The protein resides in the endosome. Its subcellular location is the secreted. The protein localises to the extracellular space. Cell surface proteoglycan that bears heparan sulfate. Binds, via the heparan sulfate side chains, alpha-4 (V) collagen and participates in Schwann cell myelination. May act as a catalyst in increasing the rate of conversion of prion protein PRPN (C) to PRNP (Sc) via associating (via the heparan sulfate side chains) with both forms of PRPN, targeting them to lipid rafts and facilitating their interaction. Required for proper skeletal muscle differentiation by sequestering FGF2 in lipid rafts preventing its binding to receptors (FGFRs) and inhibiting the FGF-mediated signaling. The chain is Glypican-1 (GPC1) from Bos taurus (Bovine).